The following is a 297-amino-acid chain: Acetyl-coenzyme A carboxylase carboxyl transferase subunit beta (297 aa).

A CoA carboxyltransferase N-terminal domain is found at 27–296 (LWHKCPACEA…PEQAREAAAV (270 aa)). Cys-31, Cys-34, Cys-50, and Cys-53 together coordinate Zn(2+). Residues 31-53 (CPACEAVLYRPELEKTLDVCPKC) form a C4-type zinc finger.

Belongs to the AccD/PCCB family. As to quaternary structure, acetyl-CoA carboxylase is a heterohexamer composed of biotin carboxyl carrier protein (AccB), biotin carboxylase (AccC) and two subunits each of ACCase subunit alpha (AccA) and ACCase subunit beta (AccD). It depends on Zn(2+) as a cofactor.

It localises to the cytoplasm. The catalysed reaction is N(6)-carboxybiotinyl-L-lysyl-[protein] + acetyl-CoA = N(6)-biotinyl-L-lysyl-[protein] + malonyl-CoA. It functions in the pathway lipid metabolism; malonyl-CoA biosynthesis; malonyl-CoA from acetyl-CoA: step 1/1. In terms of biological role, component of the acetyl coenzyme A carboxylase (ACC) complex. Biotin carboxylase (BC) catalyzes the carboxylation of biotin on its carrier protein (BCCP) and then the CO(2) group is transferred by the transcarboxylase to acetyl-CoA to form malonyl-CoA. This is Acetyl-coenzyme A carboxylase carboxyl transferase subunit beta from Pseudomonas putida (strain W619).